The primary structure comprises 585 residues: Nucleus accumbens-associated protein 2 (585 aa).

In terms of domain architecture, BTB spans 30 to 94; it reads CDVSIVVKGQ…CYTGKLTMAA (65 aa). Glycyl lysine isopeptide (Lys-Gly) (interchain with G-Cter in SUMO2) cross-links involve residues lysine 171 and lysine 215. Over residues 238–261 the composition is skewed to polar residues; sequence PYPQGERTSPGASSLPTTDSSTSY. The disordered stretch occupies residues 238–269; the sequence is PYPQGERTSPGASSLPTTDSSTSYHNEDEDDD. Glycyl lysine isopeptide (Lys-Gly) (interchain with G-Cter in SUMO2) cross-links involve residues lysine 296, lysine 426, and lysine 453. In terms of domain architecture, BEN spans 348–445; that stretch reads GSGVYITRGQ…DMCTNARRVR (98 aa). Positions 541-585 are disordered; the sequence is APEQLPADGQSSPQAFEQGNTSSSRPQTPVATATRRPEGTYAGTL. Residues 549–571 show a composition bias toward polar residues; sequence GQSSPQAFEQGNTSSSRPQTPVA.

As to quaternary structure, homooligomer; mediated by the BTB domain. Interacts with the NuRD complex. Interacts (via C-terminal part) with HDAC2. Interacts (via BTB domain) with MTA1, MTA2 and MTA3.

Its subcellular location is the nucleus. Its function is as follows. Functions as a transcriptional repressor through its association with the NuRD complex. Recruits the NuRD complex to the promoter of MDM2, leading to the repression of MDM2 transcription and subsequent stability of p53/TP53. The chain is Nucleus accumbens-associated protein 2 (Nacc2) from Rattus norvegicus (Rat).